Here is a 431-residue protein sequence, read N- to C-terminus: Glutamate-1-semialdehyde 2,1-aminomutase (431 aa).

N6-(pyridoxal phosphate)lysine is present on Lys265.

It belongs to the class-III pyridoxal-phosphate-dependent aminotransferase family. HemL subfamily. In terms of assembly, homodimer. The cofactor is pyridoxal 5'-phosphate.

It localises to the cytoplasm. The enzyme catalyses (S)-4-amino-5-oxopentanoate = 5-aminolevulinate. The protein operates within porphyrin-containing compound metabolism; protoporphyrin-IX biosynthesis; 5-aminolevulinate from L-glutamyl-tRNA(Glu): step 2/2. This is Glutamate-1-semialdehyde 2,1-aminomutase from Vibrio atlanticus (strain LGP32) (Vibrio splendidus (strain Mel32)).